A 365-amino-acid chain; its full sequence is Peptidyl-prolyl cis-trans isomerase FKBP42 (365 aa).

Over residues 1–15 the composition is skewed to basic and acidic residues; sequence MDESLEHQTQTHDQE. Positions 1–44 are disordered; it reads MDESLEHQTQTHDQESEIVTEGSAVVHSEPSQEGNVPPKVDSEA. The interval 1 to 163 is interaction with MDR1/PGP1; the sequence is MDESLEHQTQ…EVIGFDETKE (163 aa). One can recognise a PPIase FKBP-type domain in the interval 67–159; that stretch reads YSTCFLHYRA…LYEVEVIGFD (93 aa). The interaction with MRP1 stretch occupies residues 163–337; sequence EGKARSDMTV…GKDEGGAKSK (175 aa). TPR repeat units follow at residues 179–212, 230–263, and 264–297; these read ADRR…MGDD, NPCH…EEKN, and PKAL…APDD. The segment at 310–326 is calmodulin-binding; sequence QEKALYQKQKEMYKGIF. Residues 338–357 form a helical; Anchor for type IV membrane protein membrane-spanning segment; that stretch reads SLFWLIVLWQWFVSLFSRIF.

Belongs to the FKBP-type PPIase family. As to quaternary structure, interacts with calmodulin (CaM), MRP1, MRP2, MDR1/PGP1, MDR11/PGP19 and SHD/HSP90. Interacts with 1-naphthylphthalamic acid (NPA).

It is found in the cell membrane. The protein resides in the vacuole membrane. It localises to the endoplasmic reticulum. It catalyses the reaction [protein]-peptidylproline (omega=180) = [protein]-peptidylproline (omega=0). In terms of biological role, PPIases accelerate the folding of proteins. It catalyzes the cis-trans isomerization of proline imidic peptide bonds in oligopeptides. Modulates the uptake of MRP substrates into the vacuole; reduces metolachlor-GS (MOC-GS) and enhances 17-beta-estradiol 17-(beta-D-glucuronide) (E(2)17betaG) uptake. Regulates cell elongation and orientation. Functions as a positive regulator of PGP1-mediated auxin transport. Confers drug modulation of PGP1 efflux activity as interaction with NPA or flavonol quercetin prevents its physical and functional interaction with PGP1. Required for the proper localization of auxin-related ABCB transporters. Plays a role in brassinosteroid (BR) signaling pathway. Required for seed development by promoting stamen elongation and, to a lesser extent, anther dehiscence and pollen maturation, probably as a chaperone helping ABCB1 and ABCB19 auxin transporters localization and activation. Involved in auxin signaling in nectaries to promote starch accumulation to attract visiting pollinators. The chain is Peptidyl-prolyl cis-trans isomerase FKBP42 from Arabidopsis thaliana (Mouse-ear cress).